Here is a 332-residue protein sequence, read N- to C-terminus: Lipoyl synthase (332 aa).

Residues Cys-74, Cys-79, Cys-85, Cys-100, Cys-104, Cys-107, and Ser-314 each contribute to the [4Fe-4S] cluster site. Residues 85 to 303 (CFGKGTATFM…EEKAYEMGFS (219 aa)) form the Radical SAM core domain.

This sequence belongs to the radical SAM superfamily. Lipoyl synthase family. It depends on [4Fe-4S] cluster as a cofactor.

The protein localises to the cytoplasm. It catalyses the reaction [[Fe-S] cluster scaffold protein carrying a second [4Fe-4S](2+) cluster] + N(6)-octanoyl-L-lysyl-[protein] + 2 oxidized [2Fe-2S]-[ferredoxin] + 2 S-adenosyl-L-methionine + 4 H(+) = [[Fe-S] cluster scaffold protein] + N(6)-[(R)-dihydrolipoyl]-L-lysyl-[protein] + 4 Fe(3+) + 2 hydrogen sulfide + 2 5'-deoxyadenosine + 2 L-methionine + 2 reduced [2Fe-2S]-[ferredoxin]. It participates in protein modification; protein lipoylation via endogenous pathway; protein N(6)-(lipoyl)lysine from octanoyl-[acyl-carrier-protein]: step 2/2. Catalyzes the radical-mediated insertion of two sulfur atoms into the C-6 and C-8 positions of the octanoyl moiety bound to the lipoyl domains of lipoate-dependent enzymes, thereby converting the octanoylated domains into lipoylated derivatives. In Polaromonas naphthalenivorans (strain CJ2), this protein is Lipoyl synthase.